The primary structure comprises 438 residues: Mannan endo-1,4-beta-mannosidase F (438 aa).

An N-terminal signal peptide occupies residues 1 to 17; it reads MHPLPSVALLSAIGAVA. In terms of domain architecture, CBM1 spans 19–54; that stretch reads QVGPWGQCGGRSYTGETSCVSGWSCVLFNEWYSQCQ. Residues 60 to 96 form a ser-rich linker region; it reads STSSVSATAAPSSTSSSKESVPSATTSKKPVPTGSSS. Low complexity predominate over residues 61–86; that stretch reads TSSVSATAAPSSTSSSKESVPSATTS. Residues 61 to 92 form a disordered region; sequence TSSVSATAAPSSTSSSKESVPSATTSKKPVPT. The segment at 97 to 438 is catalytic; sequence FVKADGLKFN…CGVADHLSTL (342 aa). The substrate site is built by W149 and N263. E264 acts as the Proton donor in catalysis. N277 is a glycosylation site (N-linked (GlcNAc...) asparagine). A substrate-binding site is contributed by Y339. Catalysis depends on E373, which acts as the Nucleophile. W402 provides a ligand contact to substrate.

This sequence belongs to the glycosyl hydrolase 5 (cellulase A) family.

It localises to the secreted. It carries out the reaction Random hydrolysis of (1-&gt;4)-beta-D-mannosidic linkages in mannans, galactomannans and glucomannans.. Functionally, endo-1,4-mannanase, a crucial enzyme for depolymerization of seed galactomannans and wood galactoglucomannans. The polypeptide is Mannan endo-1,4-beta-mannosidase F (manF) (Aspergillus fumigatus (strain ATCC MYA-4609 / CBS 101355 / FGSC A1100 / Af293) (Neosartorya fumigata)).